The primary structure comprises 471 residues: ATP synthase subunit beta (471 aa).

Residue 156–163 (GGAGVGKT) participates in ATP binding.

It belongs to the ATPase alpha/beta chains family. F-type ATPases have 2 components, CF(1) - the catalytic core - and CF(0) - the membrane proton channel. CF(1) has five subunits: alpha(3), beta(3), gamma(1), delta(1), epsilon(1). CF(0) has three main subunits: a(1), b(2) and c(9-12). The alpha and beta chains form an alternating ring which encloses part of the gamma chain. CF(1) is attached to CF(0) by a central stalk formed by the gamma and epsilon chains, while a peripheral stalk is formed by the delta and b chains.

It localises to the cell membrane. The catalysed reaction is ATP + H2O + 4 H(+)(in) = ADP + phosphate + 5 H(+)(out). Produces ATP from ADP in the presence of a proton gradient across the membrane. The catalytic sites are hosted primarily by the beta subunits. This Lawsonia intracellularis (strain PHE/MN1-00) protein is ATP synthase subunit beta.